Reading from the N-terminus, the 122-residue chain is Serum amyloid A-3 protein (122 aa).

Positions 1–18 (MKPSIAIILCILILGVDS) are cleaved as a signal peptide. A disordered region spans residues 87–122 (TGHGAEDSRADQFANEWGRSGKDPNHFRPAGLPKRY).

It belongs to the SAA family. As to expression, found in various tissues.

The protein resides in the secreted. Functionally, major acute phase reactant. Apolipoprotein of the HDL complex. In vitro exhibits antimicrobial activity against Escherichia coli, Streptococcus uberis and Pseudomonas aeruginosa. This chain is Serum amyloid A-3 protein (Saa3), found in Mus musculus (Mouse).